The chain runs to 257 residues: Acetylglutamate kinase (257 aa).

Residues 43 to 44, R65, and N157 contribute to the substrate site; that span reads GG. Residues 180–185 and 208–210 each bind ATP; these read DVSGIL and IIT.

This sequence belongs to the acetylglutamate kinase family. ArgB subfamily. Homodimer.

It localises to the cytoplasm. The enzyme catalyses N-acetyl-L-glutamate + ATP = N-acetyl-L-glutamyl 5-phosphate + ADP. Its pathway is amino-acid biosynthesis; L-arginine biosynthesis; N(2)-acetyl-L-ornithine from L-glutamate: step 2/4. Its function is as follows. Catalyzes the ATP-dependent phosphorylation of N-acetyl-L-glutamate. The polypeptide is Acetylglutamate kinase (Enterobacter sp. (strain 638)).